The primary structure comprises 108 residues: Ig kappa chain V-V region HP 93G7 (108 aa).

The tract at residues aspartate 1–cysteine 23 is framework-1. A disulfide bond links cysteine 23 and cysteine 88. Positions arginine 24 to asparagine 34 are complementarity-determining-1. The framework-2 stretch occupies residues tryptophan 35 to tyrosine 49. The complementarity-determining-2 stretch occupies residues tyrosine 50–serine 56. The interval glycine 57 to cysteine 88 is framework-3. Residues glutamine 89–threonine 97 are complementarity-determining-3. The segment at phenylalanine 98–arginine 108 is framework-4.

The sequence is that of Ig kappa chain V-V region HP 93G7 from Mus musculus (Mouse).